Consider the following 190-residue polypeptide: UPF0301 protein Pden_0436 (190 aa).

This sequence belongs to the UPF0301 (AlgH) family.

The polypeptide is UPF0301 protein Pden_0436 (Paracoccus denitrificans (strain Pd 1222)).